Here is a 211-residue protein sequence, read N- to C-terminus: Redox-sensing transcriptional repressor Rex (211 aa).

Positions 17-56 (LYYRFIQNFAQEGMERISSKELSEAMKIDSATIRRDFSYF) form a DNA-binding region, H-T-H motif. 91 to 96 (GVGNLG) lines the NAD(+) pocket.

This sequence belongs to the transcriptional regulatory Rex family. As to quaternary structure, homodimer.

The protein localises to the cytoplasm. Modulates transcription in response to changes in cellular NADH/NAD(+) redox state. This Lysinibacillus sphaericus (strain C3-41) protein is Redox-sensing transcriptional repressor Rex.